The chain runs to 985 residues: MPSAGQRKPGSLLALQALQKWLLRGGVGAMLARQVVAALLLWLSCCVSALWRYYINSQDYSIFSTRSSIKLEYEGNSFVSWKIPESCKVENTTSPKTTLHCKRAGIHTIKPIAGNQEVERHLTVDNSYICYLWYFTVVDVYYNLSQIVTIWVYDPESASTEELIWTAKKPSLSSRVLTKQMNTLGQRPFIFTVEKRLTYHPGPLTSEGTWVIHLPMSSDDIAKVIRGNKVAFQDCFIANLYFMLTYPMTIISEPPGYEPLTVPPGSPLMLSWDTCISTFALLATDQETFQTNDSFQTWTRVRAPPGILSDAQRHSLRDVIIFDQGTLFLVDGTVYLRTEDEFTKLDESRGISETGILGFSKRRWCQIRYLYKLASKKSILIAWSKTTVYAGYATFRFVTLTDTAKLKDFLKLPQTDTLEVMSVEYLWHPLEAAVLLSHCSVCTTNTRNIRIVIYSAIFQTWTLQDFELQLPKEAILEFRFLYSAMPDIIMWDQHHVYYSYKNFTVVGTISTPSGETNLSSLSQGSKIHQVLTDRIGNVVVKMENNVMFYIKADITEAVILHTWVNTTAKTVVLFDKSFEVCILYYNENLDEKYQLQTQPYPLILELQSINKDLGDWCPYLAFQHNIHSQFYHMDKGESLTIWSQIVYPENRGLYIVVEHYGSSVMTWTQNLEYEIASGFCTKTMITRFFQTTNYELVDNYYQLQKENTGLMLLQFRPSEFSRTCLTAKPVFEIDVGCDSSKYIMVRGFNKSRCQRRDFSYVIDKELLRESLSDNLKVRYDVAKYGCPLTLELGQMFQPIVELYDENGFIKIVDANFILWEIHGRNDYTFNSTMEQNGCINEAQTWDSMIEENPDIPLDDVWGPQNYRPCFSYAIGKPGDLGQPYEILNYSNKNHIKWPMTYAGMYVYRLKILDPNYSFCNLTTIFAIESLGMIPRSSVYLVAALIFVLMLTFISILVLSYFWYLKIYRQFIIEPLHKRPAKQKKN.

A signal peptide spans 1 to 35 (MPSAGQRKPGSLLALQALQKWLLRGGVGAMLARQV). Over 36-937 (VAALLLWLSC…ESLGMIPRSS (902 aa)) the chain is Extracellular. 4 cysteine pairs are disulfide-bonded: Cys87–Cys101, Cys130–Cys235, Cys275–Cys365, and Cys439–Cys442. Residues Asn91, Asn143, and Asn292 are each glycosylated (N-linked (GlcNAc...) asparagine). 3 N-linked (GlcNAc...) asparagine glycosylation sites follow: Asn502, Asn517, and Asn565. 4 cysteine pairs are disulfide-bonded: Cys617–Cys724, Cys737–Cys919, Cys753–Cys786, and Cys838–Cys869. An N-linked (GlcNAc...) asparagine glycan is attached at Asn749. Asn830 is a glycosylation site (N-linked (GlcNAc...) asparagine). Residues Asn888, Asn915, and Asn920 are each glycosylated (N-linked (GlcNAc...) asparagine). Residues 938–958 (VYLVAALIFVLMLTFISILVL) traverse the membrane as a helical segment. Topologically, residues 959–985 (SYFWYLKIYRQFIIEPLHKRPAKQKKN) are cytoplasmic.

It belongs to the CATSPERD family. Component of the CatSper complex or CatSpermasome composed of the core pore-forming members CATSPER1, CATSPER2, CATSPER3 and CATSPER4 as well as auxiliary members CATSPERB, CATSPERG2, CATSPERD, CATSPERE, CATSPERZ, C2CD6/CATSPERT, SLCO6C1, TMEM249, TMEM262 and EFCAB9. HSPA1 may be an additional auxiliary complex member. The core complex members CATSPER1, CATSPER2, CATSPER3 and CATSPER4 form a heterotetrameric channel. The auxiliary CATSPERB, CATSPERG2, CATSPERD and CATSPERE subunits form a pavilion-like structure over the pore which stabilizes the complex through interactions with CATSPER4, CATSPER3, CATSPER1 and CATSPER2 respectively. SLCO6C1 interacts with CATSPERE and TMEM262/CATSPERH interacts with CATSPERB, further stabilizing the complex. C2CD6/CATSPERT interacts at least with CATSPERD and is required for targeting the CatSper complex in the flagellar membrane. In terms of tissue distribution, testis-specific.

The protein resides in the cell projection. It is found in the cilium. The protein localises to the flagellum membrane. Its function is as follows. Auxiliary component of the CatSper complex, a complex involved in sperm cell hyperactivation. Sperm cell hyperactivation is needed for sperm motility which is essential late in the preparation of sperm for fertilization. The chain is Cation channel sperm-associated auxiliary subunit epsilon from Mus musculus (Mouse).